A 318-amino-acid chain; its full sequence is Thymidylate synthase (318 aa).

DUMP-binding positions include Arg26 and 181–182; that span reads RR. Cys201 (nucleophile) is an active-site residue. Residues 221 to 224, Asn232, and 262 to 264 contribute to the dUMP site; these read RSAD and HIY. (6R)-5,10-methylene-5,6,7,8-tetrahydrofolate is bound at residue Asp224. Ala317 is a (6R)-5,10-methylene-5,6,7,8-tetrahydrofolate binding site.

This sequence belongs to the thymidylate synthase family. Bacterial-type ThyA subfamily. In terms of assembly, homodimer.

It localises to the cytoplasm. The catalysed reaction is dUMP + (6R)-5,10-methylene-5,6,7,8-tetrahydrofolate = 7,8-dihydrofolate + dTMP. It participates in pyrimidine metabolism; dTTP biosynthesis. Functionally, catalyzes the reductive methylation of 2'-deoxyuridine-5'-monophosphate (dUMP) to 2'-deoxythymidine-5'-monophosphate (dTMP) while utilizing 5,10-methylenetetrahydrofolate (mTHF) as the methyl donor and reductant in the reaction, yielding dihydrofolate (DHF) as a by-product. This enzymatic reaction provides an intracellular de novo source of dTMP, an essential precursor for DNA biosynthesis. This Staphylococcus haemolyticus (strain JCSC1435) protein is Thymidylate synthase.